The following is a 761-amino-acid chain: Probable beta-galactosidase 2 (761 aa).

The first 23 residues, 1 to 23 (MGTIKNNFQLLWLILLIVVLVNG), serve as a signal peptide directing secretion. 2 N-linked (GlcNAc...) asparagine glycosylation sites follow: Asn39 and Asn110. The active-site Proton donor is the Glu195. Asn206 carries an N-linked (GlcNAc...) asparagine glycan. Glu267 (nucleophile) is an active-site residue. N-linked (GlcNAc...) asparagine glycosylation is found at Asn385, Asn405, Asn438, Asn501, Asn552, Asn553, Asn577, Asn592, Asn642, Asn690, and Asn696.

Belongs to the glycosyl hydrolase 35 family.

The catalysed reaction is Hydrolysis of terminal non-reducing beta-D-galactose residues in beta-D-galactosides.. Cleaves beta-linked terminal galactosyl residues from gangliosides, glycoproteins, and glycosaminoglycans. This chain is Probable beta-galactosidase 2 (glb2), found in Dictyostelium discoideum (Social amoeba).